A 299-amino-acid polypeptide reads, in one-letter code: Glycine--tRNA ligase alpha subunit (299 aa).

The protein belongs to the class-II aminoacyl-tRNA synthetase family. As to quaternary structure, tetramer of two alpha and two beta subunits.

The protein resides in the cytoplasm. It carries out the reaction tRNA(Gly) + glycine + ATP = glycyl-tRNA(Gly) + AMP + diphosphate. The chain is Glycine--tRNA ligase alpha subunit from Caulobacter vibrioides (strain ATCC 19089 / CIP 103742 / CB 15) (Caulobacter crescentus).